The following is a 233-amino-acid chain: Nickel import system ATP-binding protein NikE (233 aa).

Residues 2–228 (IELKHVTFGY…DRHPYTKELV (227 aa)) form the ABC transporter domain. An ATP-binding site is contributed by 35-42 (GESGCGKS).

It belongs to the ABC transporter superfamily. In terms of assembly, the complex is composed of two ATP-binding proteins (NikD and NikE), two transmembrane proteins (NikB and NikC) and a solute-binding protein (NikA).

Its subcellular location is the cell membrane. The catalysed reaction is Ni(2+)(out) + ATP + H2O = Ni(2+)(in) + ADP + phosphate + H(+). In terms of biological role, part of the ABC transporter complex NikABCDE (Opp2) involved in nickel import. Probably responsible for energy coupling to the transport system. In Staphylococcus aureus (strain USA300), this protein is Nickel import system ATP-binding protein NikE.